The sequence spans 73 residues: Large ribosomal subunit protein bL31 (73 aa).

Zn(2+) contacts are provided by Cys16, Cys18, Cys36, and Cys39.

The protein belongs to the bacterial ribosomal protein bL31 family. Type A subfamily. Part of the 50S ribosomal subunit. The cofactor is Zn(2+).

In terms of biological role, binds the 23S rRNA. This Desulfosudis oleivorans (strain DSM 6200 / JCM 39069 / Hxd3) (Desulfococcus oleovorans) protein is Large ribosomal subunit protein bL31.